The primary structure comprises 564 residues: CTP synthase (564 aa).

Residues 1 to 265 (MTKFVFVTGG…DEIVCHRLDI (265 aa)) are amidoligase domain. CTP is bound at residue S13. Residue S13 coordinates UTP. ATP-binding positions include 14–19 (SLGKGI) and D71. Mg(2+) is bound by residues D71 and E139. Residues 146 to 148 (DIE), 186 to 191 (KTKPTQ), and K222 contribute to the CTP site. UTP is bound by residues 186–191 (KTKPTQ) and K222. Residues 290–543 (SIALVGKYVD…IQAAISFAGQ (254 aa)) enclose the Glutamine amidotransferase type-1 domain. G351 contacts L-glutamine. C378 (nucleophile; for glutamine hydrolysis) is an active-site residue. Residues 379-382 (LGMQ), E402, and R469 each bind L-glutamine. Active-site residues include H516 and E518.

This sequence belongs to the CTP synthase family. In terms of assembly, homotetramer.

It carries out the reaction UTP + L-glutamine + ATP + H2O = CTP + L-glutamate + ADP + phosphate + 2 H(+). The catalysed reaction is L-glutamine + H2O = L-glutamate + NH4(+). It catalyses the reaction UTP + NH4(+) + ATP = CTP + ADP + phosphate + 2 H(+). Its pathway is pyrimidine metabolism; CTP biosynthesis via de novo pathway; CTP from UDP: step 2/2. With respect to regulation, allosterically activated by GTP, when glutamine is the substrate; GTP has no effect on the reaction when ammonia is the substrate. The allosteric effector GTP functions by stabilizing the protein conformation that binds the tetrahedral intermediate(s) formed during glutamine hydrolysis. Inhibited by the product CTP, via allosteric rather than competitive inhibition. Functionally, catalyzes the ATP-dependent amination of UTP to CTP with either L-glutamine or ammonia as the source of nitrogen. Regulates intracellular CTP levels through interactions with the four ribonucleotide triphosphates. The protein is CTP synthase of Nitrosomonas europaea (strain ATCC 19718 / CIP 103999 / KCTC 2705 / NBRC 14298).